We begin with the raw amino-acid sequence, 54 residues long: Pars intercerebralis major peptide D1 (54 aa).

Belongs to the granulin family. Six disulfide bonds are present. As to expression, brain.

Its subcellular location is the secreted. The chain is Pars intercerebralis major peptide D1 from Locusta migratoria (Migratory locust).